A 205-amino-acid chain; its full sequence is Adenylyl-sulfate kinase (205 aa).

An ATP-binding site is contributed by 31–38 (GLSGAGKS). The active-site Phosphoserine intermediate is S105.

Belongs to the APS kinase family.

The enzyme catalyses adenosine 5'-phosphosulfate + ATP = 3'-phosphoadenylyl sulfate + ADP + H(+). The protein operates within sulfur metabolism; hydrogen sulfide biosynthesis; sulfite from sulfate: step 2/3. Functionally, catalyzes the synthesis of activated sulfate. This Shewanella baltica (strain OS155 / ATCC BAA-1091) protein is Adenylyl-sulfate kinase.